We begin with the raw amino-acid sequence, 210 residues long: Probable GTP-binding protein EngB (210 aa).

The EngB-type G domain occupies 27 to 201 (MGIEVAFAGR…HQKLDIWFSQ (175 aa)). Residues 35-42 (GRSNAGKS), 62-66 (GRTQL), 80-83 (DLPG), 147-150 (TKAD), and 180-182 (FSV) each bind GTP. Positions 42 and 64 each coordinate Mg(2+).

This sequence belongs to the TRAFAC class TrmE-Era-EngA-EngB-Septin-like GTPase superfamily. EngB GTPase family. The cofactor is Mg(2+).

Its function is as follows. Necessary for normal cell division and for the maintenance of normal septation. The sequence is that of Probable GTP-binding protein EngB from Photorhabdus laumondii subsp. laumondii (strain DSM 15139 / CIP 105565 / TT01) (Photorhabdus luminescens subsp. laumondii).